A 348-amino-acid polypeptide reads, in one-letter code: MPFLWGLRQDKEACVGTNNQSYICDTGHCCGQSQCCNYYYELWWFWLVWTVVIILSCCCVCHHRRAKHRLQAQQRQHEINLIAYREAHNYSALPFYFRFLPNSLLPPYEEVVNRPPTPPPPYSAFQLQQQQQLLPPPPQGGPPGGSPPGADPPPQGSQGAQSSPLSGPSRSSTRPPSVADPQSPEVPTDREATKASGTESGSPMAGHGELDPGAFLDQDSECKEELLKDSRSERGGVSPDSEDKTPGRHRRFTGDSGIEVCVCNRGHHDDDLKEFNTLIDDALDGPLDFCDSCHVRPPVDEEEGLCLSSEGQAREHGHPHLPRPPACLLLNTINEQDSPNSQHSGSPS.

A helical transmembrane segment spans residues 42–62; the sequence is LWWFWLVWTVVIILSCCCVCH. 2 disordered regions span residues 111–253 and 306–348; these read VVNR…RRFT and CLSS…GSPS. Residues 134-155 show a composition bias toward pro residues; it reads LPPPPQGGPPGGSPPGADPPPQ. A compositionally biased stretch (low complexity) spans 156-177; sequence GSQGAQSSPLSGPSRSSTRPPS. Ser-177 is modified (phosphoserine). Residues 220-234 show a composition bias toward basic and acidic residues; sequence SECKEELLKDSRSER. Residues 331 to 348 are compositionally biased toward polar residues; the sequence is NTINEQDSPNSQHSGSPS.

It is found in the membrane. The protein is WW domain binding protein 1-like (Wbp1l) of Mus musculus (Mouse).